The following is a 352-amino-acid chain: Putative hetero-Diels-Alderase (352 aa).

Residues 1–20 (MRYHLSALVLVFTAFRETLT) form the signal peptide. N-linked (GlcNAc...) asparagine glycosylation is found at Asn26, Asn41, Asn47, Asn135, Asn211, and Asn310.

This sequence belongs to the eupF Diels-Alderase family.

It functions in the pathway secondary metabolite biosynthesis; terpenoid biosynthesis. In terms of biological role, putative hetero-Diels-Alderase; part of the gene cluster that mediates the biosynthesis of eupenifeldin, a bistropolone meroterpenoid that acts as an antitumor agent. The first step of eupenifeldin biosynthesis is the biosynthesis of 3-methylorcinaldehyde performed by the non-reducing polyketide synthase eupA. Oxidative dearomatization of 3-methylorcinaldehyde likely catalyzed by the FAD-dependent monooxygenase eupB is followed by oxidative ring expansion by the 2-oxoglutarate-dependent dioxygenase eupC to provide the first tropolone metabolite, tropolone stipitaldehyde. In parallel, generation of sesquiterpene alpha-humulene from farnesylpyrophosphate (FPP) is catalyzed by the terpene cyclase eupE. The cytochrome P450 monooxygenase eupD then hydroxylates humulene to humulenol. The putative Diels-Alderase eupF probably catalyzes the formation of the tropolone-humulene skeleton by linking humulenol and the polyketide moiety. The short-chain dehydrogenase/reductase eupG and the flavin-dependent monooxygenase eupH are also essential for eupenifeldin biosynthesis and are likely the additional decorating enzymes of the tropolone-humulene skeleton to produce final eupenifeldin or derivatives. This Phoma sp protein is Putative hetero-Diels-Alderase.